The primary structure comprises 259 residues: Aliphatic sulfonates import ATP-binding protein SsuB 1 (259 aa).

The ABC transporter domain occupies 15–229; it reads VECRRITRRF…QASTPGFQAL (215 aa). Residue 47–54 coordinates ATP; that stretch reads GSSGSGKT.

Belongs to the ABC transporter superfamily. Aliphatic sulfonates importer (TC 3.A.1.17.2) family. The complex is composed of two ATP-binding proteins (SsuB), two transmembrane proteins (SsuC) and a solute-binding protein (SsuA).

Its subcellular location is the cell inner membrane. It carries out the reaction ATP + H2O + aliphatic sulfonate-[sulfonate-binding protein]Side 1 = ADP + phosphate + aliphatic sulfonateSide 2 + [sulfonate-binding protein]Side 1.. In terms of biological role, part of the ABC transporter complex SsuABC involved in aliphatic sulfonates import. Responsible for energy coupling to the transport system. This Pseudomonas fluorescens (strain ATCC BAA-477 / NRRL B-23932 / Pf-5) protein is Aliphatic sulfonates import ATP-binding protein SsuB 1.